Here is a 288-residue protein sequence, read N- to C-terminus: Transposase for insertion sequence element IS1106 (288 aa).

It belongs to the transposase 11 family.

Involved in the transposition of the insertion sequence. The polypeptide is Transposase for insertion sequence element IS1106 (Neisseria meningitidis serogroup B).